Here is a 340-residue protein sequence, read N- to C-terminus: Protein RecA (340 aa).

74 to 81 contacts ATP; that stretch reads GPESSGKT.

Belongs to the RecA family.

The protein localises to the cytoplasm. Functionally, can catalyze the hydrolysis of ATP in the presence of single-stranded DNA, the ATP-dependent uptake of single-stranded DNA by duplex DNA, and the ATP-dependent hybridization of homologous single-stranded DNAs. It interacts with LexA causing its activation and leading to its autocatalytic cleavage. The chain is Protein RecA from Porphyromonas gingivalis (strain ATCC 33277 / DSM 20709 / CIP 103683 / JCM 12257 / NCTC 11834 / 2561).